Here is a 312-residue protein sequence, read N- to C-terminus: Malate dehydrogenase (312 aa).

NAD(+) is bound by residues 7-13 (GAAGGIG) and Asp34. Residues Arg81 and Arg87 each coordinate substrate. NAD(+) contacts are provided by residues Asn94 and 117–119 (ITN). Substrate contacts are provided by Asn119 and Arg153. The active-site Proton acceptor is the His177. Met227 contacts NAD(+).

It belongs to the LDH/MDH superfamily. MDH type 1 family. Homodimer.

The enzyme catalyses (S)-malate + NAD(+) = oxaloacetate + NADH + H(+). Functionally, catalyzes the reversible oxidation of malate to oxaloacetate. The sequence is that of Malate dehydrogenase from Escherichia coli (strain ATCC 8739 / DSM 1576 / NBRC 3972 / NCIMB 8545 / WDCM 00012 / Crooks).